The following is a 266-amino-acid chain: Hydroxyethylthiazole kinase (266 aa).

Met-43 is a substrate binding site. 2 residues coordinate ATP: Arg-119 and Thr-166. Substrate is bound at residue Gly-193.

This sequence belongs to the Thz kinase family. Requires Mg(2+) as cofactor.

It catalyses the reaction 5-(2-hydroxyethyl)-4-methylthiazole + ATP = 4-methyl-5-(2-phosphooxyethyl)-thiazole + ADP + H(+). It functions in the pathway cofactor biosynthesis; thiamine diphosphate biosynthesis; 4-methyl-5-(2-phosphoethyl)-thiazole from 5-(2-hydroxyethyl)-4-methylthiazole: step 1/1. Catalyzes the phosphorylation of the hydroxyl group of 4-methyl-5-beta-hydroxyethylthiazole (THZ). The protein is Hydroxyethylthiazole kinase of Methanococcus maripaludis (strain DSM 14266 / JCM 13030 / NBRC 101832 / S2 / LL).